We begin with the raw amino-acid sequence, 40 residues long: Antifungal protein ginkbilobin-1 (40 aa).

One can recognise a Gnk2-homologous domain in the interval 3 to 40 (TAFVSSAHNTQKIPAGAPFNRNLRAMLADLRQNAAFAG). An alpha-D-mannopyranose-binding site is contributed by Asn11.

As to expression, expressed in seeds (at the protein level).

Functionally, possesses antifungal activity against B.cinerea, M.arachidicola, F.oxysporum, R.solani and C.comatus and moderate antibacterial activity against S.aureus, P.aeruginosa and E.coli. Inhibits HIV-1 reverse transcriptase and proliferation of murine splenocytes. Exerts antifungal activity through its carbohydrate-binding specificity. The sequence is that of Antifungal protein ginkbilobin-1 from Ginkgo biloba (Ginkgo).